The chain runs to 536 residues: MELSSPSREECPRPQGRVGIMAASLMGLLLLQAASWASGARPCSPKSFGYSSVVCVCNATYCDSLDPLTLPDPGTFSRFESTRSGRRMELSLGTFQANRTSKGLLLTLQPDQKFQKVKGFGGAMTDAAALNILALSPQARNLLLKSYFSEEGIEYNIIRVPMASCDFSIRIYTYADTPDDFQLLNFSLPEEDVKLKIPLIHQALKMAQRPVSLFASPWTSPTWLKTNGAVNGKGTLKGHPGDRYHQTWAKYFVKFLDAYAEHNLHFWAVTAENEPSAGLFTGYPFQCLGFTPEHQRDFIARDPGPTLANSTHRNVRLLMLDDQRLLLPHWAQVVLADPEAAKYVHGIAVHWYLDFLAPAKATLGETHRLFPNTMLFASEACVGSKFWEQSVRLGSWDRGVQYSHSIITNLLYHVVGWTDWNLALNPEGGPNWVRNFVDSPIIVDISKDTFYKQPMFYHLGHFSKFIPEGSQRVGLAASEKNNLDTVALLRPDGSAVVVVLNRSSKDVPLTIKDPALGFLETISPSYSIHTYLWHRK.

The first 39 residues, 1-39, serve as a signal peptide directing secretion; it reads MELSSPSREECPRPQGRVGIMAASLMGLLLLQAASWASG. 2 disulfides stabilise this stretch: Cys43–Cys55 and Cys57–Cys62. 3 N-linked (GlcNAc...) asparagine glycosylation sites follow: Asn58, Asn98, and Asn185. Glu274 serves as the catalytic Proton donor. Residue Asn309 is glycosylated (N-linked (GlcNAc...) asparagine). The active-site Nucleophile is Glu379. Asn501 carries an N-linked (GlcNAc...) asparagine glycan.

It belongs to the glycosyl hydrolase 30 family. As to quaternary structure, interacts with saposin-C. Interacts with SCARB2. Interacts with TCP1. Interacts with GRN; this interaction prevents aggregation of GBA1-SCARB2 complex via interaction with HSPA1A upon stress.

It is found in the lysosome membrane. It catalyses the reaction a beta-D-glucosyl-(1&lt;-&gt;1')-N-acylsphing-4-enine + H2O = an N-acylsphing-4-enine + D-glucose. It carries out the reaction a beta-D-galactosyl-(1&lt;-&gt;1')-N-acylsphing-4-enine + H2O = an N-acylsphing-4-enine + D-galactose. The catalysed reaction is cholesteryl 3-beta-D-glucoside + H2O = cholesterol + D-glucose. The enzyme catalyses a beta-D-glucosyl-(1&lt;-&gt;1')-N-acylsphing-4-enine + cholesterol = cholesteryl 3-beta-D-glucoside + an N-acylsphing-4-enine. It catalyses the reaction beta-D-glucosyl-N-(9Z-octadecenoyl)-sphing-4E-enine + cholesterol = N-(9Z-octadecenoyl)-sphing-4-enine + cholesteryl 3-beta-D-glucoside. It carries out the reaction beta-D-glucosyl-N-octanoylsphing-4E-enine + cholesterol = N-octanoylsphing-4-enine + cholesteryl 3-beta-D-glucoside. The catalysed reaction is beta-D-glucosyl-N-dodecanoylsphing-4-enine + cholesterol = N-dodecanoylsphing-4-enine + cholesteryl 3-beta-D-glucoside. The enzyme catalyses beta-D-glucosyl-(1&lt;-&gt;1)-N-octadecanoylsphing-4-enine + cholesterol = N-octadecanoylsphing-4-enine + cholesteryl 3-beta-D-glucoside. It catalyses the reaction beta-D-glucosyl-(1&lt;-&gt;1')-N-(15Z-tetracosenoyl)-sphing-4-enine + cholesterol = N-(15Z-tetracosenoyl)-sphing-4-enine + cholesteryl 3-beta-D-glucoside. It carries out the reaction a beta-D-galactosyl-(1&lt;-&gt;1')-N-acylsphing-4-enine + cholesterol = cholesteryl 3-beta-D-galactoside + an N-acylsphing-4-enine. The catalysed reaction is 1-(beta-D-galactosyl)-N-dodecanoylsphing-4-enine + cholesterol = cholesteryl 3-beta-D-galactoside + N-dodecanoylsphing-4-enine. The enzyme catalyses a beta-D-xylosyl-(1&lt;-&gt;1')-N-acylsphing-4-enine + cholesterol = cholesteryl 3-beta-D-xyloside + an N-acylsphing-4-enine. It catalyses the reaction beta-D-xylosyl-(1&lt;-&gt;1')-N-(9Z-octadecenoyl)-sphing-4-enine + cholesterol = cholesteryl 3-beta-D-xyloside + N-(9Z-octadecenoyl)-sphing-4-enine. It functions in the pathway steroid metabolism; cholesterol metabolism. Its pathway is sphingolipid metabolism. Functionally, glucosylceramidase that catalyzes, within the lysosomal compartment, the hydrolysis of glucosylceramides/GlcCers (such as beta-D-glucosyl-(1&lt;-&gt;1')-N-acylsphing-4-enine) into free ceramides (such as N-acylsphing-4-enine) and glucose. Plays a central role in the degradation of complex lipids and the turnover of cellular membranes. Through the production of ceramides, participates in the PKC-activated salvage pathway of ceramide formation. Catalyzes the glucosylation of cholesterol, through a transglucosylation reaction where glucose is transferred from GlcCer to cholesterol. GlcCer containing mono-unsaturated fatty acids (such as beta-D-glucosyl-N-(9Z-octadecenoyl)-sphing-4-enine) are preferred as glucose donors for cholesterol glucosylation when compared with GlcCer containing same chain length of saturated fatty acids (such as beta-D-glucosyl-N-octadecanoyl-sphing-4-enine). Under specific conditions, may alternatively catalyze the reverse reaction, transferring glucose from cholesteryl 3-beta-D-glucoside to ceramide. Can also hydrolyze cholesteryl 3-beta-D-glucoside producing glucose and cholesterol. Catalyzes the hydrolysis of galactosylceramides/GalCers (such as beta-D-galactosyl-(1&lt;-&gt;1')-N-acylsphing-4-enine), as well as the transfer of galactose between GalCers and cholesterol in vitro, but with lower activity than with GlcCers. Contrary to GlcCer and GalCer, xylosylceramide/XylCer (such as beta-D-xyosyl-(1&lt;-&gt;1')-N-acylsphing-4-enine) is not a good substrate for hydrolysis, however it is a good xylose donor for transxylosylation activity to form cholesteryl 3-beta-D-xyloside. This is Lysosomal acid glucosylceramidase (GBA1) from Sus scrofa (Pig).